A 753-amino-acid chain; its full sequence is Metal regulatory transcription factor 1 (753 aa).

Gly-2 carries the post-translational modification N-acetylglycine. At Ser-5 the chain carries Phosphoserine. A Nuclear localization signal motif is present at residues 133–138 (KRKEVK). 6 consecutive C2H2-type zinc fingers follow at residues 140-164 (YQCT…QKTH), 170-194 (FVCN…VRVH), 200-224 (FECD…QRLH), 229-253 (FNCE…IRTH), 259-283 (FRCD…VRTH), and 289-313 (FFCP…MKGH). Position 305 is a phosphoserine (Ser-305). Disordered stretches follow at residues 308 to 328 (SHMK…QHNG), 395 to 466 (ESFN…ALLQ), and 648 to 715 (SRRK…LSAM). Positions 408–417 (PPSTGNSASL) are enriched in polar residues. Residues 655–666 (SPPPPEPSPQAP) show a composition bias toward pro residues. The span at 679-698 (SSAPVPGSSSSTLPSSCEQS) shows a compositional bias: low complexity. Positions 700–712 (QAETPSDPQTETL) are enriched in polar residues.

It localises to the nucleus. The protein resides in the cytoplasm. In terms of biological role, zinc-dependent transcriptional regulator of cellular adaption to conditions of exposure to heavy metals. Binds to metal responsive elements (MRE) in promoters and activates the transcription of metallothionein genes like metallothionein-2/MT2A. Also regulates the expression of metalloproteases in response to intracellular zinc and functions as a catabolic regulator of cartilages. This is Metal regulatory transcription factor 1 (MTF1) from Homo sapiens (Human).